The chain runs to 418 residues: Deubiquitinase and deneddylase Dub1 (418 aa).

Residues 1–11 (MLSPTNSTSKT) are compositionally biased toward polar residues. The segment at 1-23 (MLSPTNSTSKTAPVPPQDSSKPV) is disordered. Residues 40 to 60 (TALVVLLVVVTLGLILLFYSF) form a helical membrane-spanning segment. The disordered stretch occupies residues 72–145 (TRPSTKEQPT…LPPKAPKPVK (74 aa)). The span at 86 to 141 (VPLPSPPLAVPRPSTPPPPVISRPSMPPAPTPAISPPSTPSAPKPSTPPPLPPKAP) shows a compositional bias: pro residues. Catalysis depends on residues H288, D305, and C358.

The protein belongs to the peptidase C48 family.

Its subcellular location is the secreted. It localises to the host cell. It is found in the membrane. Effector proteins function to alter host cell physiology and promote bacterial survival in host tissues. This protease possesses deubiquitinating and deneddylating activities. This chain is Deubiquitinase and deneddylase Dub1 (cdu1), found in Chlamydia trachomatis serovar E (strain Sweden2).